A 269-amino-acid chain; its full sequence is 4-hydroxy-tetrahydrodipicolinate reductase (269 aa).

NAD(+) is bound by residues 9–14 (GCAGKM), Asp-35, 102–104 (GTT), and 128–131 (APNF). Catalysis depends on His-158, which acts as the Proton donor/acceptor. Residue His-159 participates in (S)-2,3,4,5-tetrahydrodipicolinate binding. Residue Lys-162 is the Proton donor of the active site. 168–169 (GT) contributes to the (S)-2,3,4,5-tetrahydrodipicolinate binding site.

The protein belongs to the DapB family.

Its subcellular location is the cytoplasm. It carries out the reaction (S)-2,3,4,5-tetrahydrodipicolinate + NAD(+) + H2O = (2S,4S)-4-hydroxy-2,3,4,5-tetrahydrodipicolinate + NADH + H(+). The catalysed reaction is (S)-2,3,4,5-tetrahydrodipicolinate + NADP(+) + H2O = (2S,4S)-4-hydroxy-2,3,4,5-tetrahydrodipicolinate + NADPH + H(+). Its pathway is amino-acid biosynthesis; L-lysine biosynthesis via DAP pathway; (S)-tetrahydrodipicolinate from L-aspartate: step 4/4. Catalyzes the conversion of 4-hydroxy-tetrahydrodipicolinate (HTPA) to tetrahydrodipicolinate. This is 4-hydroxy-tetrahydrodipicolinate reductase from Gloeobacter violaceus (strain ATCC 29082 / PCC 7421).